A 609-amino-acid chain; its full sequence is Glutamine--fructose-6-phosphate aminotransferase [isomerizing] (609 aa).

The active-site Nucleophile; for GATase activity is the Cys2. The Glutamine amidotransferase type-2 domain maps to 2–218 (CGIVGAIAQR…EGDIAEITRR (217 aa)). SIS domains lie at 286-426 (ADEL…LKGL) and 458-599 (LAED…VDQP). Lys604 acts as the For Fru-6P isomerization activity in catalysis.

As to quaternary structure, homodimer. In pull-down experiments interacts with CedA.

The protein localises to the cytoplasm. It carries out the reaction D-fructose 6-phosphate + L-glutamine = D-glucosamine 6-phosphate + L-glutamate. In terms of biological role, catalyzes the first step in hexosamine metabolism, converting fructose-6P into glucosamine-6P using glutamine as a nitrogen source. This chain is Glutamine--fructose-6-phosphate aminotransferase [isomerizing] (glmS), found in Escherichia coli (strain K12).